A 301-amino-acid chain; its full sequence is PWI domain-containing protein C825.05c (301 aa).

Positions 26–137 constitute a PWI domain; sequence STKFPASYDT…YGIPEKFILE (112 aa). Phosphoserine is present on S86. Basic and acidic residues-rich tracts occupy residues 145-182, 189-205, and 215-229; these read LKDRTEASKEESKTVTDHSNRRESRRESTYYDSRERNG, TLDRKRFHDASDTERNR, and RFSEKPRGERYDIRS. Positions 145 to 301 are disordered; sequence LKDRTEASKE…ESDSGTQKHD (157 aa). The residue at position 199 (S199) is a Phosphoserine. Residues 244–253 are compositionally biased toward basic residues; sequence PTRRRERHYR. A compositionally biased stretch (basic and acidic residues) spans 254-289; sequence TRDDEGFDEFGRSRDGRWRESRTSYREKHRYDRDAL. Over residues 290–301 the composition is skewed to polar residues; it reads SSESDSGTQKHD. Position 291 is a phosphoserine (S291).

The protein localises to the nucleus. This chain is PWI domain-containing protein C825.05c, found in Schizosaccharomyces pombe (strain 972 / ATCC 24843) (Fission yeast).